The chain runs to 480 residues: Aromatic-L-amino-acid decarboxylase (480 aa).

Met-1 carries the N-acetylmethionine modification. 2 consecutive repeat copies span residues 58–115 (GDIE…TELE) and 118–178 (MLDW…TQAA). Residues 58-178 (GDIERIIMPG…AASPELTQAA (121 aa)) are 2 X approximate tandem repeats. Residue Thr-82 coordinates substrate. Positions 148 and 149 each coordinate pyridoxal 5'-phosphate. His-192 lines the substrate pocket. 2 residues coordinate pyridoxal 5'-phosphate: Thr-246 and Asn-300. Residue Lys-303 is modified to N6-(pyridoxal phosphate)lysine.

Belongs to the group II decarboxylase family. As to quaternary structure, homodimer. Requires pyridoxal 5'-phosphate as cofactor.

The catalysed reaction is L-dopa + H(+) = dopamine + CO2. It catalyses the reaction 5-hydroxy-L-tryptophan + H(+) = serotonin + CO2. It functions in the pathway catecholamine biosynthesis; dopamine biosynthesis; dopamine from L-tyrosine: step 2/2. Its function is as follows. Catalyzes the decarboxylation of L-3,4-dihydroxyphenylalanine (DOPA) to dopamine and L-5-hydroxytryptophan to serotonin. This is Aromatic-L-amino-acid decarboxylase (DDC) from Cavia porcellus (Guinea pig).